The chain runs to 343 residues: MSDSPITQRKQDHIDWLLQDEKIERQQAGFDQIQLTHRGLPECDYAQVDSGTTFLQHSLSFPLLISSMTGGASNALNTINENLARAAEHCQVAMAVGSQRTMILDRKAEKSFQLRQFAPTVPLIANMGAIQLNYGFGYDEAQRMVEVLEADALYLHLNPLQEVIQPEGDTNFAKLAEKIAHLKNHLSVPIILKEVGCGLSEKDIQLGLDAGIEWFDLAGRGGTSWSRIEAHRTEDSQQAELGKMFQDWGLTTPQALKQARPFQSQAQFIASGGIRNGIDMVKSVIMGAQICGVAAPLLKPAMASTNATIGTIEQLQQEFRTAQFLLGMPKMADLFLNDSLIVP.

9–10 (RK) contacts substrate. Residues serine 66, 67–69 (SMT), serine 98, and asparagine 126 contribute to the FMN site. Residue 98-100 (SQR) participates in substrate binding. Glutamine 161 contacts substrate. Mg(2+) is bound at residue glutamate 162. FMN is bound by residues lysine 193, threonine 223, 273-275 (GIR), and 294-295 (AA).

Belongs to the IPP isomerase type 2 family. In terms of assembly, homooctamer. Dimer of tetramers. FMN is required as a cofactor. Requires NADPH as cofactor. Mg(2+) serves as cofactor.

It localises to the cytoplasm. The enzyme catalyses isopentenyl diphosphate = dimethylallyl diphosphate. Involved in the biosynthesis of isoprenoids. Catalyzes the 1,3-allylic rearrangement of the homoallylic substrate isopentenyl (IPP) to its allylic isomer, dimethylallyl diphosphate (DMAPP). The chain is Isopentenyl-diphosphate delta-isomerase from Hydrogenovibrio crunogenus (strain DSM 25203 / XCL-2) (Thiomicrospira crunogena).